Here is a 42-residue protein sequence, read N- to C-terminus: Photosystem I reaction center subunit IX (42 aa).

A helical transmembrane segment spans residues 7–27; it reads YLSTAPVIATIWFGFLAGLLI.

The protein belongs to the PsaJ family.

The protein localises to the plastid. It localises to the chloroplast thylakoid membrane. Its function is as follows. May help in the organization of the PsaE and PsaF subunits. The chain is Photosystem I reaction center subunit IX from Chaetosphaeridium globosum (Charophycean green alga).